The chain runs to 387 residues: 3-ketoacyl-CoA thiolase (387 aa).

Cys91 (acyl-thioester intermediate) is an active-site residue. Catalysis depends on proton acceptor residues His343 and Cys373.

The protein belongs to the thiolase-like superfamily. Thiolase family. As to quaternary structure, heterotetramer of two alpha chains (FadB) and two beta chains (FadA).

It is found in the cytoplasm. The catalysed reaction is an acyl-CoA + acetyl-CoA = a 3-oxoacyl-CoA + CoA. It functions in the pathway lipid metabolism; fatty acid beta-oxidation. Catalyzes the final step of fatty acid oxidation in which acetyl-CoA is released and the CoA ester of a fatty acid two carbons shorter is formed. The chain is 3-ketoacyl-CoA thiolase from Klebsiella pneumoniae subsp. pneumoniae (strain ATCC 700721 / MGH 78578).